Consider the following 256-residue polypeptide: tRNA (guanine-N(7)-)-methyltransferase (256 aa).

Residues 1–15 (MVATGGQAQDQSHNQ) are compositionally biased toward polar residues. The disordered stretch occupies residues 1–22 (MVATGGQAQDQSHNQEPGVLCP). S-adenosyl-L-methionine contacts are provided by residues Gly-79, 102–103 (EI), 137–138 (NA), and Leu-157. Asp-160 is a catalytic residue. 235-237 (SEE) serves as a coordination point for S-adenosyl-L-methionine.

Belongs to the class I-like SAM-binding methyltransferase superfamily. TrmB family.

It is found in the nucleus. It carries out the reaction guanosine(46) in tRNA + S-adenosyl-L-methionine = N(7)-methylguanosine(46) in tRNA + S-adenosyl-L-homocysteine. Its pathway is tRNA modification; N(7)-methylguanine-tRNA biosynthesis. Functionally, catalyzes the formation of N(7)-methylguanine at position 46 (m7G46) in tRNA. In Drosophila yakuba (Fruit fly), this protein is tRNA (guanine-N(7)-)-methyltransferase.